Consider the following 337-residue polypeptide: Protein-methionine-sulfoxide reductase catalytic subunit MsrP (337 aa).

Residues 1–50 constitute a signal peptide (tat-type signal); sequence MLIKLPSASGSKESDVTPESIYLSRRTLLASSLAGLAVTALPRWASAADA. Mo-molybdopterin contacts are provided by residues Asn94, 97–98, Cys152, Thr187, Asn237, Arg242, and 253–255; these read YE and SVK.

Belongs to the MsrP family. As to quaternary structure, heterodimer of a catalytic subunit (MsrP) and a heme-binding subunit (MsrQ). It depends on Mo-molybdopterin as a cofactor. Post-translationally, predicted to be exported by the Tat system. The position of the signal peptide cleavage has not been experimentally proven.

It localises to the periplasm. It carries out the reaction L-methionyl-[protein] + a quinone + H2O = L-methionyl-(S)-S-oxide-[protein] + a quinol. The enzyme catalyses L-methionyl-[protein] + a quinone + H2O = L-methionyl-(R)-S-oxide-[protein] + a quinol. In terms of biological role, part of the MsrPQ system that repairs oxidized periplasmic proteins containing methionine sulfoxide residues (Met-O), using respiratory chain electrons. Thus protects these proteins from oxidative-stress damage caused by reactive species of oxygen and chlorine generated by the host defense mechanisms. MsrPQ is essential for the maintenance of envelope integrity under bleach stress, rescuing a wide series of structurally unrelated periplasmic proteins from methionine oxidation. The catalytic subunit MsrP is non-stereospecific, being able to reduce both (R-) and (S-) diastereoisomers of methionine sulfoxide. The polypeptide is Protein-methionine-sulfoxide reductase catalytic subunit MsrP (Pseudomonas syringae pv. tomato (strain ATCC BAA-871 / DC3000)).